Reading from the N-terminus, the 201-residue chain is Large ribosomal subunit protein uL4 (201 aa).

The disordered stretch occupies residues 44-68 (RAQKSRADVSGSGRKPWRQKGTGRA).

This sequence belongs to the universal ribosomal protein uL4 family. Part of the 50S ribosomal subunit.

One of the primary rRNA binding proteins, this protein initially binds near the 5'-end of the 23S rRNA. It is important during the early stages of 50S assembly. It makes multiple contacts with different domains of the 23S rRNA in the assembled 50S subunit and ribosome. In terms of biological role, forms part of the polypeptide exit tunnel. In Buchnera aphidicola subsp. Schizaphis graminum (strain Sg), this protein is Large ribosomal subunit protein uL4.